The following is a 162-amino-acid chain: Caveolin-2 (162 aa).

Over 1 to 86 (MGLETEKADV…FEISKYVMYK (86 aa)) the chain is Cytoplasmic. Phosphotyrosine; by SRC is present on Tyr-19. Phosphoserine is present on residues Ser-20 and Ser-23. Tyr-27 is modified (phosphotyrosine). Ser-36 bears the Phosphoserine mark. Residues 87-107 (FLTVFLAIPLAFIAGILFATL) constitute an intramembrane region (helical). Residues 108–162 (SCLHIWILMPFVKTCLMVLPSVQTIWKSVTDVVIGPLCTSVGRSFSSVSMQLSHD) are Cytoplasmic-facing.

Belongs to the caveolin family. As to quaternary structure, monomer or homodimer. Interacts with CAV1; the interaction forms a stable heterooligomeric complex that is required for targeting to lipid rafts and for caveolae formation. Tyrosine phosphorylated forms do not form heterooligomers with the Tyr-19-phosphorylated form existing as a monomer or dimer, and the Tyr-27-form as a monomer only. Interacts (tyrosine phosphorylated form) with the SH2 domain-containing proteins, RASA1, NCK1 and SRC. Interacts (tyrosine phosphorylated form) with INSR, the interaction (Tyr-27-phosphorylated form) is increased on insulin stimulation. Interacts (Tyr-19 phosphorylated form) with MAPK1 (phosphorylated form); the interaction, promoted by insulin, leads to nuclear location and MAPK1 activation. Interacts with STAT3; the interaction is increased on insulin-induced tyrosine phosphorylation leading to STAT activation. In terms of processing, phosphorylated on serine and tyrosine residues. CAV1 promotes phosphorylation on Ser-23 which then targets the complex to the plasma membrane, lipid rafts and caveolae. Phosphorylation on Ser-36 appears to modulate mitosis in endothelial cells. Phosphorylation on both Tyr-19 and Tyr-27 is required for insulin-induced 'Ser-727' phosphorylation of STAT3 and its activation. Phosphorylation on Tyr-19 is required for insulin-induced phosphorylation of MAPK1 and DNA binding of STAT3. Tyrosine phosphorylation is induced by both EGF and insulin.

It is found in the nucleus. Its subcellular location is the cytoplasm. The protein resides in the golgi apparatus membrane. It localises to the cell membrane. The protein localises to the membrane. It is found in the caveola. Its function is as follows. May act as a scaffolding protein within caveolar membranes. Interacts directly with G-protein alpha subunits and can functionally regulate their activity. Acts as an accessory protein in conjunction with CAV1 in targeting to lipid rafts and driving caveolae formation. The Ser-36 phosphorylated form has a role in modulating mitosis in endothelial cells. Positive regulator of cellular mitogenesis of the MAPK signaling pathway. Required for the insulin-stimulated nuclear translocation and activation of MAPK1 and STAT3, and the subsequent regulation of cell cycle progression. This chain is Caveolin-2 (Cav2), found in Mus musculus (Mouse).